Reading from the N-terminus, the 207-residue chain is Small ribosomal subunit protein uS4 (207 aa).

The disordered stretch occupies residues 31–53 (KAKFDSKPGQHGRTSGTRTSDFG). A compositionally biased stretch (polar residues) spans 42-52 (GRTSGTRTSDF). Residues 97-158 (SRLDNVVYRM…KSKKQTRVTE (62 aa)) enclose the S4 RNA-binding domain.

It belongs to the universal ribosomal protein uS4 family. As to quaternary structure, part of the 30S ribosomal subunit. Contacts protein S5. The interaction surface between S4 and S5 is involved in control of translational fidelity.

Its function is as follows. One of the primary rRNA binding proteins, it binds directly to 16S rRNA where it nucleates assembly of the body of the 30S subunit. Functionally, with S5 and S12 plays an important role in translational accuracy. This chain is Small ribosomal subunit protein uS4, found in Polaromonas sp. (strain JS666 / ATCC BAA-500).